Consider the following 687-residue polypeptide: MKNTSAFAWTKDDEQIAWLTIDVPNEKMNTLQAAFAEQVTQVLDEIEEQQAHIKGLVIQSGKPDNFIAGADINMIANCQNASEAQALAEKGQHLFQRIEDLPFATVAAIHGPCLGGGLELALACDYRVCSDDNKTKLGLPEVQLGLLPGSGGTQRLPRLIGLLPSLDIILTGKQLRPKTALKLGVVDASVPHTILSRIAADFALKKKAKRKLTAKEWGLSRNPLGRNVIFSQAEKQAQKKARGNYPAIAAILDCIEHGLDKGMKKGLQREAEQFARLAMTPESAALRSLFFAMTEMKKEKGSDAEPKSIDYVGVLGGGLMGGGIAHVSIAKAKKKVTIKDINNDGLLNAYQYHYQRLDTLRKRRIISKAQLQQQMLQLTGVTEFDGFKKLDVVVEAVFEDLNLKQEMVKAVQEQGKEDVIFATNTSSLPIGQIAEGAQKPENIVGLHYFSPVEKMPLVEVIPHATTSDETISTVVALAKQQGKTPIVVKDSAGFYVNRILAPYMNEAARLLLAGEPIEVLDEALLDFGFPVGPISLLDEVGVDIGAKIMPILEAELGDRFRSPDVFQTLIDDKRLGKKTKRGFYVYKGKKKEPDQEVYTLLNIKPQSQLSKNEIAMRCVLPMLAEAKRCLDEGIIASERDGDIGAIFGIGFPPFLGGPFTYMNTLGEEKLATLMRNYADKYGDRFIE.

Positions 1 to 191 (MKNTSAFAWT…KLGVVDASVP (191 aa)) are enoyl-CoA hydratase. The tract at residues 307 to 687 (KSIDYVGVLG…ADKYGDRFIE (381 aa)) is 3-hydroxyacyl-CoA dehydrogenase.

In the N-terminal section; belongs to the enoyl-CoA hydratase/isomerase family. The protein in the central section; belongs to the 3-hydroxyacyl-CoA dehydrogenase family. In terms of assembly, heterotetramer of two alpha chains (FadJ) and two beta chains (FadI).

It is found in the cytoplasm. It catalyses the reaction a (3S)-3-hydroxyacyl-CoA = a (2E)-enoyl-CoA + H2O. The enzyme catalyses a 4-saturated-(3S)-3-hydroxyacyl-CoA = a (3E)-enoyl-CoA + H2O. It carries out the reaction a (3S)-3-hydroxyacyl-CoA + NAD(+) = a 3-oxoacyl-CoA + NADH + H(+). The catalysed reaction is (3S)-3-hydroxybutanoyl-CoA = (3R)-3-hydroxybutanoyl-CoA. It participates in lipid metabolism; fatty acid beta-oxidation. Functionally, catalyzes the formation of a hydroxyacyl-CoA by addition of water on enoyl-CoA. Also exhibits 3-hydroxyacyl-CoA epimerase and 3-hydroxyacyl-CoA dehydrogenase activities. This Aliivibrio fischeri (strain ATCC 700601 / ES114) (Vibrio fischeri) protein is Fatty acid oxidation complex subunit alpha.